Reading from the N-terminus, the 88-residue chain is Small ribosomal subunit protein uS15 (88 aa).

Belongs to the universal ribosomal protein uS15 family. Part of the 30S ribosomal subunit. Forms a bridge to the 50S subunit in the 70S ribosome, contacting the 23S rRNA.

In terms of biological role, one of the primary rRNA binding proteins, it binds directly to 16S rRNA where it helps nucleate assembly of the platform of the 30S subunit by binding and bridging several RNA helices of the 16S rRNA. Its function is as follows. Forms an intersubunit bridge (bridge B4) with the 23S rRNA of the 50S subunit in the ribosome. In Mycoplasma mycoides subsp. mycoides SC (strain CCUG 32753 / NCTC 10114 / PG1), this protein is Small ribosomal subunit protein uS15.